Here is a 128-residue protein sequence, read N- to C-terminus: Large-conductance mechanosensitive channel (128 aa).

The next 2 membrane-spanning stretches (helical) occupy residues phenylalanine 10–glycine 30 and glycine 76–isoleucine 96.

It belongs to the MscL family. Homopentamer.

Its subcellular location is the cell inner membrane. Functionally, channel that opens in response to stretch forces in the membrane lipid bilayer. May participate in the regulation of osmotic pressure changes within the cell. This chain is Large-conductance mechanosensitive channel, found in Haemophilus influenzae (strain 86-028NP).